The primary structure comprises 431 residues: RNA-binding motif, single-stranded-interacting protein 3 (431 aa).

The disordered stretch occupies residues 28 to 53; it reads YAPAPHPMAPPSPSTNSSSNSSGEQL. The segment covering 31–40 has biased composition (pro residues); it reads APHPMAPPSP. RRM domains follow at residues 56–129 and 135–220; these read TNLY…MAKQ and TNLY…FADG. Disordered regions lie at residues 220-242 and 393-431; these read GGQK…PREG and TSPQ…QSKP. Residues 401–411 are compositionally biased toward low complexity; that stretch reads SSQDSSGQQQQ.

The protein resides in the cytoplasm. In terms of biological role, binds poly(A) and poly(U) oligoribonucleotides. This chain is RNA-binding motif, single-stranded-interacting protein 3 (Rbms3), found in Mus musculus (Mouse).